We begin with the raw amino-acid sequence, 375 residues long: tRNA-specific 2-thiouridylase MnmA (375 aa).

ATP is bound by residues Gly-16–Ser-23 and Met-42. The segment at Asn-102 to Asp-104 is interaction with target base in tRNA. Cys-107 acts as the Nucleophile in catalysis. A disulfide bridge links Cys-107 with Cys-203. Residue Gly-131 participates in ATP binding. Positions Lys-153–Gln-155 are interaction with tRNA. The active-site Cysteine persulfide intermediate is the Cys-203. Positions Arg-315–Tyr-316 are interaction with tRNA.

The protein belongs to the MnmA/TRMU family.

It is found in the cytoplasm. It carries out the reaction S-sulfanyl-L-cysteinyl-[protein] + uridine(34) in tRNA + AH2 + ATP = 2-thiouridine(34) in tRNA + L-cysteinyl-[protein] + A + AMP + diphosphate + H(+). In terms of biological role, catalyzes the 2-thiolation of uridine at the wobble position (U34) of tRNA, leading to the formation of s(2)U34. The chain is tRNA-specific 2-thiouridylase MnmA from Pseudomonas paraeruginosa (strain DSM 24068 / PA7) (Pseudomonas aeruginosa (strain PA7)).